A 344-amino-acid polypeptide reads, in one-letter code: Meiotic expression up-regulated protein 26 (344 aa).

Its subcellular location is the nucleus. This chain is Meiotic expression up-regulated protein 26 (meu26), found in Schizosaccharomyces pombe (strain 972 / ATCC 24843) (Fission yeast).